The sequence spans 382 residues: Apolipoprotein A-IV (382 aa).

The first 20 residues, 1-20 (MFLRAVVLTLALVAVTGARA), serve as a signal peptide directing secretion. 13 repeat units span residues 33–54 (DYFSQLSNNAKEAVEHLQQSEL), 60–81 (ALFQDKLGQVNTYADNLQKKLV), 82–103 (PFATELHERLTKDSEKLKEEIR), 115–136 (PHANEVSQKIGDNVRELQQRLG), 137–158 (PYADELRTQVNTHAEHLRRHLT), 159–180 (SHAQRMEAVLRENVDNLQSSLT), 181–202 (PYADEFKAKIDRNIEELKGHLT), 203–224 (PYADELKVKIDQNVEELRRSLA), 225–246 (PYAQDVQEKLNHQLEGLAFQMK), 247–268 (KNAEELKAKITANADELRQRLA), 269–286 (PVVEDVRGKLRDNAKGLQ), 287–308 (ESLAQLNSHLDRQVEEFRHNMG), and 309–330 (PYGDTFNRALVQQVEELRQKLG). The tract at residues 33 to 330 (DYFSQLSNNA…QVEELRQKLG (298 aa)) is 13 X 22 AA approximate tandem repeats. Residues 362–382 (ENQDMPLALPEQEQAPGPLES) form a disordered region.

It belongs to the apolipoprotein A1/A4/E family. In terms of assembly, homodimer.

The protein resides in the secreted. Functionally, may have a role in chylomicrons and VLDL secretion and catabolism. Required for efficient activation of lipoprotein lipase by ApoC-II; potent activator of LCAT. Apoa-IV is a major component of HDL and chylomicrons. This chain is Apolipoprotein A-IV (APOA4), found in Acinonyx jubatus (Cheetah).